We begin with the raw amino-acid sequence, 324 residues long: Zinc metalloproteinase leucurolysin-B (324 aa).

The region spanning 1 to 119 (DTVLLNRISH…LNPQCILNEP (119 aa)) is the Peptidase M12B domain. Asp11 is a binding site for Ca(2+). Cystine bridges form between Cys34-Cys114, Cys74-Cys98, and Cys76-Cys81. His59 contributes to the Zn(2+) binding site. Glu60 is an active-site residue. His63 and His69 together coordinate Zn(2+). An N-linked (GlcNAc...) asparagine glycan is attached at Asn97. Ca(2+)-binding residues include Cys114, Asn117, Val129, Asn132, Leu134, Glu136, Glu139, and Asp142. Residues 127–213 (PPVCGNELLE…QCPTDDFKRN (87 aa)) enclose the Disintegrin domain. 13 disulfide bridges follow: Cys130–Cys159, Cys141–Cys154, Cys143–Cys149, Cys153–Cys176, Cys167–Cys173, Cys172–Cys198, Cys185–Cys205, Cys192–Cys224, Cys217–Cys229, Cys236–Cys286, Cys251–Cys295, Cys264–Cys274, and Cys281–Cys315. The D/ECD-tripeptide signature appears at 191–193 (ECD). N-linked (GlcNAc...) asparagine glycosylation is found at Asn296 and Asn305.

This sequence belongs to the venom metalloproteinase (M12B) family. P-III subfamily. P-IIIa sub-subfamily. Monomer. Zn(2+) serves as cofactor. Post-translationally, N-glycosylated. The N-terminus is blocked. In terms of tissue distribution, expressed by the venom gland.

Its subcellular location is the secreted. Its activity is regulated as follows. Inhibited by EDTA, but not by PMSF. Pre-incubation with 2 mM DTT completely abolishes activity. In terms of biological role, snake venom zinc metalloproteinase that acts as a potent hemorrhagic toxin. Hydrolyzes the insulin B chain at the 14-Ala-|-Leu-15 bond but not the 16-Tyr-|-Leu-17 bond. Degrades the alpha-chain of fibrin and hydrolyzes the Aalpha-chain of fibrinogen (FGA) while leaving the beta and gamma chains unaffected. Degrades type-I collagen and its gelatin. Degrades the alpha-1 chain of type-IV collagen and its gelatin but not the alpha-2 chain. Degrades plasma fibronectin, plasma vitronectin and basement membrane enactin. It inhibits collagen-induced platelet aggregation. This is Zinc metalloproteinase leucurolysin-B from Bothrops leucurus (Whitetail lancehead).